The chain runs to 723 residues: Catalase-peroxidase (723 aa).

The segment at residues 96-225 (WHAAGSYRVA…LAAVMMGLIY (130 aa)) is a cross-link (tryptophyl-tyrosyl-methioninium (Trp-Tyr) (with M-251)). The Proton acceptor role is filled by H97. The segment at residues 225-251 (YVNPEGVDGNPDPLKTAEDVRVTFARM) is a cross-link (tryptophyl-tyrosyl-methioninium (Tyr-Met) (with W-96)). H266 provides a ligand contact to heme b.

The protein belongs to the peroxidase family. Peroxidase/catalase subfamily. Homodimer or homotetramer. Requires heme b as cofactor. Formation of the three residue Trp-Tyr-Met cross-link is important for the catalase, but not the peroxidase activity of the enzyme.

The catalysed reaction is H2O2 + AH2 = A + 2 H2O. It carries out the reaction 2 H2O2 = O2 + 2 H2O. In terms of biological role, bifunctional enzyme with both catalase and broad-spectrum peroxidase activity. This Alkalilimnicola ehrlichii (strain ATCC BAA-1101 / DSM 17681 / MLHE-1) protein is Catalase-peroxidase.